Consider the following 190-residue polypeptide: Vascular endothelial growth factor A (190 aa).

The signal sequence occupies residues 1-26; it reads MNFLLSWVHWSLALLLYLHHAKWSQA. Intrachain disulfides connect Cys51–Cys93, Cys82–Cys127, and Cys86–Cys129. Residue Asn100 is glycosylated (N-linked (GlcNAc...) asparagine).

This sequence belongs to the PDGF/VEGF growth factor family. As to quaternary structure, homodimer; disulfide-linked. Also found as heterodimer with PGF. Interacts with NRP1. Interacts with BSG. Interacts with CD82; this interaction inhibits VEGFA-mediated signaling pathway.

It is found in the secreted. Functionally, growth factor active in angiogenesis, vasculogenesis and endothelial cell growth. Induces endothelial cell proliferation, promotes cell migration, inhibits apoptosis and induces permeabilization of blood vessels. Binds to the FLT1/VEGFR1 and KDR/VEGFR2 receptors, heparan sulfate and heparin. Binding to NRP1 receptor initiates a signaling pathway needed for motor neuron axon guidance and cell body migration, including for the caudal migration of facial motor neurons from rhombomere 4 to rhombomere 6 during embryonic development. Also binds the DEAR/FBXW7-AS1 receptor. The protein is Vascular endothelial growth factor A (VEGFA) of Sus scrofa (Pig).